The sequence spans 347 residues: Purine-rich element-binding protein gamma (347 aa).

2 disordered regions span residues 1-34 (MERARRRGGGGGRGRGGKNVGGSGLSKSRLYPQA) and 133-169 (GHRQEHGHSKEQGSRRRQKHSAPSPPVSVGSEEHPHS). The span at 9–24 (GGGGRGRGGKNVGGSG) shows a compositional bias: gly residues. The DNA-binding element occupies 51-293 (AGGAAEIQEL…GIFLKVSEVR (243 aa)). Positions 134–146 (HRQEHGHSKEQGS) are enriched in basic and acidic residues. Residues Ser160, Ser163, and Ser339 each carry the phosphoserine modification.

It belongs to the PUR DNA-binding protein family. As to expression, isoform 1 is expressed in testis and glioblastoma. Isoform 2 is expressed in fetal lung.

The protein localises to the nucleus. This Homo sapiens (Human) protein is Purine-rich element-binding protein gamma (PURG).